Here is a 215-residue protein sequence, read N- to C-terminus: High frequency lysogenization protein HflD homolog (215 aa).

It belongs to the HflD family.

It is found in the cytoplasm. The protein resides in the cell inner membrane. The protein is High frequency lysogenization protein HflD homolog of Haemophilus ducreyi (strain 35000HP / ATCC 700724).